A 20-amino-acid polypeptide reads, in one-letter code: Superoxide dismutase [Fe] (20 aa).

Belongs to the iron/manganese superoxide dismutase family. In terms of assembly, homodimer. The cofactor is Fe cation.

It is found in the periplasm. The catalysed reaction is 2 superoxide + 2 H(+) = H2O2 + O2. In terms of biological role, destroys superoxide anion radicals which are normally produced within the cells and which are toxic to biological systems. In Photobacterium damsela subsp. piscicida (Pasteurella piscicida), this protein is Superoxide dismutase [Fe] (sodB).